A 455-amino-acid polypeptide reads, in one-letter code: Epoxide hydrolase 1 (455 aa).

The chain crosses the membrane as a helical; Signal-anchor for type III membrane protein span at residues 1–21; that stretch reads MLLELLLASVLGFVIYWFVSG. Over 22-455 the chain is Cytoplasmic; it reads DKEESLPLED…CKFVGLVERQ (434 aa). The active-site Nucleophile is D226. A Dimethylated arginine modification is found at R295. Y374 acts as the Proton donor in catalysis. The active-site Proton acceptor is H431.

The protein belongs to the peptidase S33 family.

The protein localises to the microsome membrane. It is found in the endoplasmic reticulum membrane. The enzyme catalyses cis-stilbene oxide + H2O = (1R,2R)-hydrobenzoin. The catalysed reaction is 1-(4-methoxyphenyl)-N-methyl-N-[(3-methyloxetan-3-yl)methyl]methanamine + H2O = 2-{[(4-methoxybenzyl)(methyl)amino]methyl}-2-methylpropane-1,3-diol. It catalyses the reaction 8,9-epoxy-(5Z,11Z,14Z)-eicosatrienoate + H2O = 8,9-dihydroxy-(5Z,11Z,14Z)-eicosatrienoate. It carries out the reaction 11,12-epoxy-(5Z,8Z,14Z)-eicosatrienoate + H2O = 11,12-dihydroxy-(5Z,8Z,14Z)-eicosatrienoate. The enzyme catalyses 2-(5Z,8Z,11Z,14Z-eicosatetraenoyl)-glycerol + H2O = glycerol + (5Z,8Z,11Z,14Z)-eicosatetraenoate + H(+). Inhibited by 10-hydroxystearamide and methoxy-arachidonyl fluorophosphate. Its function is as follows. Biotransformation enzyme that catalyzes the hydrolysis of arene and aliphatic epoxides to less reactive and more water soluble dihydrodiols by the trans addition of water. May play a role in the metabolism of endogenous lipids such as epoxide-containing fatty acids. Metabolizes the abundant endocannabinoid 2-arachidonoylglycerol (2-AG) to free arachidonic acid (AA) and glycerol. Binds 20(S)-hydroxycholesterol (20(S)-OHC). This is Epoxide hydrolase 1 (EPHX1) from Oryctolagus cuniculus (Rabbit).